The following is a 247-amino-acid chain: 2,3-bisphosphoglycerate-dependent phosphoglycerate mutase (247 aa).

Substrate is bound by residues Arg-8–Asn-15, Thr-21–Gly-22, Arg-60, Glu-87–Tyr-90, Lys-98, Arg-114–Arg-115, and Gly-183–Asn-184. His-9 (tele-phosphohistidine intermediate) is an active-site residue. Residue Glu-87 is the Proton donor/acceptor of the active site.

The protein belongs to the phosphoglycerate mutase family. BPG-dependent PGAM subfamily.

The enzyme catalyses (2R)-2-phosphoglycerate = (2R)-3-phosphoglycerate. The protein operates within carbohydrate degradation; glycolysis; pyruvate from D-glyceraldehyde 3-phosphate: step 3/5. Functionally, catalyzes the interconversion of 2-phosphoglycerate and 3-phosphoglycerate. In Chlorobium limicola (strain DSM 245 / NBRC 103803 / 6330), this protein is 2,3-bisphosphoglycerate-dependent phosphoglycerate mutase.